The following is a 134-amino-acid chain: Peptide methionine sulfoxide reductase MsrB (134 aa).

Residues 9–131 (DEYWRDKLDA…NSASIQLQKE (123 aa)) enclose the MsrB domain. Residues Cys48, Cys51, Cys97, and Cys100 each coordinate Zn(2+). Cys120 (nucleophile) is an active-site residue.

This sequence belongs to the MsrB Met sulfoxide reductase family. It depends on Zn(2+) as a cofactor.

The catalysed reaction is L-methionyl-[protein] + [thioredoxin]-disulfide + H2O = L-methionyl-(R)-S-oxide-[protein] + [thioredoxin]-dithiol. The protein is Peptide methionine sulfoxide reductase MsrB of Saccharophagus degradans (strain 2-40 / ATCC 43961 / DSM 17024).